We begin with the raw amino-acid sequence, 263 residues long: MSPMNAFDPQAEDSTTTIGRNLRSRPLARKKLSEMVEEELEQMIRRREFGEGEQLPSERELMAFFNVGRPSVREALAALKRKGLVQINNGERARVSRPSADTIIGELSGMAKDFLSHPGGIAHFEQLRLFFESSLVRYAAEHATDEQIDLLAKALEINSQSLDNNAAFIRSDVDFHRVLAEIPGNPIFMAIHVALLDWLIAARPTVADQALHEHNNVSYQQHIAIVDAIRRHDPDEADRALQSHLNSVSATWHAFGQTTNKKK.

Positions 1–23 (MSPMNAFDPQAEDSTTTIGRNLR) are disordered. The 69-residue stretch at 30–98 (KKLSEMVEEE…NGERARVSRP (69 aa)) folds into the HTH gntR-type domain. The H-T-H motif DNA-binding region spans 58–77 (ERELMAFFNVGRPSVREALA).

Belongs to the NanR family.

Its function is as follows. Transcriptional repressor that controls expression of the genes required for the catabolism of sialic acids. The sequence is that of HTH-type transcriptional repressor NanR from Escherichia coli O45:K1 (strain S88 / ExPEC).